The chain runs to 256 residues: uncharacterized protein (256 aa).

Disordered stretches follow at residues 1–38 and 51–75; these read MGKT…PNRD and PRPS…RCPQ.

This is an uncharacterized protein from Homo sapiens (Human).